Here is a 444-residue protein sequence, read N- to C-terminus: Ribosomal protein uS12 methylthiotransferase RimO (444 aa).

In terms of domain architecture, MTTase N-terminal spans 1 to 117 (MKVGIISLGC…ITEVISSALK (117 aa)). Positions 10, 46, 80, 154, 158, and 161 each coordinate [4Fe-4S] cluster. Positions 140 to 370 (YQPGPSAYIK…WEVQKEITRK (231 aa)) constitute a Radical SAM core domain. A TRAM domain is found at 373-441 (EGLVGTEMRV…DYDLIGEMTN (69 aa)).

Belongs to the methylthiotransferase family. RimO subfamily. [4Fe-4S] cluster serves as cofactor.

The protein localises to the cytoplasm. It carries out the reaction L-aspartate(89)-[ribosomal protein uS12]-hydrogen + (sulfur carrier)-SH + AH2 + 2 S-adenosyl-L-methionine = 3-methylsulfanyl-L-aspartate(89)-[ribosomal protein uS12]-hydrogen + (sulfur carrier)-H + 5'-deoxyadenosine + L-methionine + A + S-adenosyl-L-homocysteine + 2 H(+). Catalyzes the methylthiolation of an aspartic acid residue of ribosomal protein uS12. The sequence is that of Ribosomal protein uS12 methylthiotransferase RimO from Natranaerobius thermophilus (strain ATCC BAA-1301 / DSM 18059 / JW/NM-WN-LF).